Reading from the N-terminus, the 433-residue chain is Glutamate-1-semialdehyde 2,1-aminomutase (433 aa).

Lysine 269 is modified (N6-(pyridoxal phosphate)lysine).

Belongs to the class-III pyridoxal-phosphate-dependent aminotransferase family. HemL subfamily. In terms of assembly, homodimer. Pyridoxal 5'-phosphate is required as a cofactor.

Its subcellular location is the cytoplasm. The enzyme catalyses (S)-4-amino-5-oxopentanoate = 5-aminolevulinate. Its pathway is porphyrin-containing compound metabolism; protoporphyrin-IX biosynthesis; 5-aminolevulinate from L-glutamyl-tRNA(Glu): step 2/2. The chain is Glutamate-1-semialdehyde 2,1-aminomutase from Renibacterium salmoninarum (strain ATCC 33209 / DSM 20767 / JCM 11484 / NBRC 15589 / NCIMB 2235).